The chain runs to 360 residues: Phospho-N-acetylmuramoyl-pentapeptide-transferase (360 aa).

10 consecutive transmembrane segments (helical) span residues 27-47, 73-93, 94-114, 132-152, 168-188, 199-219, 236-256, 263-283, 288-308, and 338-358; these read ILSIITALTISLWMGPKLIAW, TMGGIMILTAISVTVFLWADL, TNPYVWAVMFVLLGYGAVGFV, WKYFWQSSIALVVAFALYAYG, VMPQLGLAYILLTYFVIVGTS, GLAIMPTVFVAAGFAFIAWAT, ASELVVVCAAIVGAGFGFLWF, VFMGDVGSLALGGALGTIAVL, FLLVIMGGVFVVETLSVILQV, and VIVRFWIISMLLVLIALATLK.

The protein belongs to the glycosyltransferase 4 family. MraY subfamily. The cofactor is Mg(2+).

Its subcellular location is the cell inner membrane. It catalyses the reaction UDP-N-acetyl-alpha-D-muramoyl-L-alanyl-gamma-D-glutamyl-meso-2,6-diaminopimeloyl-D-alanyl-D-alanine + di-trans,octa-cis-undecaprenyl phosphate = di-trans,octa-cis-undecaprenyl diphospho-N-acetyl-alpha-D-muramoyl-L-alanyl-D-glutamyl-meso-2,6-diaminopimeloyl-D-alanyl-D-alanine + UMP. It participates in cell wall biogenesis; peptidoglycan biosynthesis. In terms of biological role, catalyzes the initial step of the lipid cycle reactions in the biosynthesis of the cell wall peptidoglycan: transfers peptidoglycan precursor phospho-MurNAc-pentapeptide from UDP-MurNAc-pentapeptide onto the lipid carrier undecaprenyl phosphate, yielding undecaprenyl-pyrophosphoryl-MurNAc-pentapeptide, known as lipid I. In Aliivibrio fischeri (strain MJ11) (Vibrio fischeri), this protein is Phospho-N-acetylmuramoyl-pentapeptide-transferase.